A 476-amino-acid chain; its full sequence is Protein transport protein Sec61 subunit alpha isoform 2 (476 aa).

Residues 1-33 (MGIKFLEVIKPFCAVLPEIQKPERKIQFREKVL) lie on the Cytoplasmic side of the membrane. A helical transmembrane segment spans residues 34–53 (WTAITLFIFLVCCQIPLFGI). Residues 54-76 (MSSDSADPFYWMRVILASNRGTL) are Lumenal-facing. Residues 77 to 96 (MELGISPIVTSGLIMQLLAG) traverse the membrane as a helical segment. At 97-117 (AKIIEVGDTPKDRALFNGAQK) the chain is on the cytoplasmic side. A helical transmembrane segment spans residues 118 to 138 (LFGMIITIGQAIVYVMTGMYG). Over 139 to 144 (DPAEMG) the chain is Lumenal. Residues 145–165 (AGICLLIIIQLFVAGLIVLLL) traverse the membrane as a helical segment. Topologically, residues 166–172 (DELLQKG) are cytoplasmic. A helical membrane pass occupies residues 173 to 193 (YGLGSGISLFIATNICETIVW). The Lumenal portion of the chain corresponds to 194-240 (KAFSPTTINTGRGTEFEGAVIALFHLLATRTDKVRALREAFYRQNLP). A helical membrane pass occupies residues 241-261 (NLMNLIATVFVFAVVIYFQGF). At 262–288 (RVDLPIKSARYRGQYSSYPIKLFYTSN) the chain is on the cytoplasmic side. Residues 289-309 (IPIILQSALVSNLYVISQMLS) traverse the membrane as a helical segment. The Lumenal portion of the chain corresponds to 310–354 (VRFSGNFLVNLLGQWADVSGGGPARSYPVGGLCYYLSPPESMGAI). The helical transmembrane segment at 355–375 (FEDPVHVVVYIIFMLGSCAFF) threads the bilayer. Over 376 to 420 (SKTWIEVSGSSAKDVAKQLKEQQMVMRGHRDTSMVHELNRYIPTA) the chain is Cytoplasmic. A helical membrane pass occupies residues 421–441 (AAFGGLCIGALSVLADFLGAI). Topologically, residues 442 to 445 (GSGT) are lumenal. Residues 446 to 462 (GILLAVTIIYQYFEIFV) traverse the membrane as a helical segment. The Cytoplasmic segment spans residues 463–476 (KEQAEVGGMGALFF).

The protein belongs to the SecY/SEC61-alpha family. As to quaternary structure, the SEC61 channel-forming translocon complex consists of channel-forming core components SEC61A1, SEC61B and SEC61G and different auxiliary components such as SEC62 and SEC63.

The protein localises to the endoplasmic reticulum membrane. Its function is as follows. Component of SEC61 channel-forming translocon complex that mediates transport of signal peptide-containing precursor polypeptides across the endoplasmic reticulum (ER). Forms a ribosome receptor and a gated pore in the ER membrane, both functions required for cotranslational translocation of nascent polypeptides. This chain is Protein transport protein Sec61 subunit alpha isoform 2 (SEC61A2), found in Homo sapiens (Human).